Reading from the N-terminus, the 362-residue chain is Serine/threonine-protein kinase-like protein At3g51990 (362 aa).

The N-terminal stretch at 1–24 is a signal peptide; the sequence is MGYLSCKAGSAVAIAVSSAASTSG. Positions 21-32 are enriched in low complexity; it reads STSGSTSSKASA. The segment at 21 to 43 is disordered; that stretch reads STSGSTSSKASAPPESPIEDRPR. The 271-residue stretch at 59–329 folds into the Protein kinase domain; it reads FDINNLLGRG…PGMEEVVGWL (271 aa). ATP contacts are provided by residues 65-73 and lysine 86; that span reads LGRGSHGSV. Asparagine 136 carries an N-linked (GlcNAc...) asparagine glycan. Aspartate 185 functions as the Proton acceptor in the catalytic mechanism. Residue serine 219 is modified to Phosphoserine. Threonine 220 and threonine 225 each carry phosphothreonine. Phosphotyrosine is present on tyrosine 233.

Belongs to the protein kinase superfamily. Ser/Thr protein kinase family.

The protein resides in the secreted. It carries out the reaction L-seryl-[protein] + ATP = O-phospho-L-seryl-[protein] + ADP + H(+). The enzyme catalyses L-threonyl-[protein] + ATP = O-phospho-L-threonyl-[protein] + ADP + H(+). The polypeptide is Serine/threonine-protein kinase-like protein At3g51990 (Arabidopsis thaliana (Mouse-ear cress)).